We begin with the raw amino-acid sequence, 227 residues long: Cytochrome c oxidase subunit 2 (227 aa).

Over 1 to 26 (MATWSNLSIQDGASPLMEQLSFFHDD) the chain is Mitochondrial intermembrane. Residues 27–48 (HTMVVLLITVIVGYALSYMLFN) form a helical membrane-spanning segment. The Mitochondrial matrix portion of the chain corresponds to 49–62 (AYTNRNMLHGHLIE). A helical transmembrane segment spans residues 63–82 (TIWTALPAITLIFIALPSLR). The Mitochondrial intermembrane segment spans residues 83-227 (LLYLLDDSVD…LFIKWLSKMI (145 aa)). His161, Cys196, Glu198, Cys200, His204, and Met207 together coordinate Cu cation. Position 198 (Glu198) interacts with Mg(2+).

It belongs to the cytochrome c oxidase subunit 2 family. Component of the cytochrome c oxidase (complex IV, CIV), a multisubunit enzyme composed of a catalytic core of 3 subunits and several supernumerary subunits. The complex exists as a monomer or a dimer and forms supercomplexes (SCs) in the inner mitochondrial membrane with ubiquinol-cytochrome c oxidoreductase (cytochrome b-c1 complex, complex III, CIII). Cu cation serves as cofactor.

The protein resides in the mitochondrion inner membrane. The enzyme catalyses 4 Fe(II)-[cytochrome c] + O2 + 8 H(+)(in) = 4 Fe(III)-[cytochrome c] + 2 H2O + 4 H(+)(out). Component of the cytochrome c oxidase, the last enzyme in the mitochondrial electron transport chain which drives oxidative phosphorylation. The respiratory chain contains 3 multisubunit complexes succinate dehydrogenase (complex II, CII), ubiquinol-cytochrome c oxidoreductase (cytochrome b-c1 complex, complex III, CIII) and cytochrome c oxidase (complex IV, CIV), that cooperate to transfer electrons derived from NADH and succinate to molecular oxygen, creating an electrochemical gradient over the inner membrane that drives transmembrane transport and the ATP synthase. Cytochrome c oxidase is the component of the respiratory chain that catalyzes the reduction of oxygen to water. Electrons originating from reduced cytochrome c in the intermembrane space (IMS) are transferred via the dinuclear copper A center (CU(A)) of subunit 2 and heme A of subunit 1 to the active site in subunit 1, a binuclear center (BNC) formed by heme A3 and copper B (CU(B)). The BNC reduces molecular oxygen to 2 water molecules using 4 electrons from cytochrome c in the IMS and 4 protons from the mitochondrial matrix. This is Cytochrome c oxidase subunit 2 (COII) from Schistocerca gregaria (Desert locust).